We begin with the raw amino-acid sequence, 1113 residues long: StAR-related lipid transfer protein 13 (1113 aa).

The residue at position 1 (M1) is an N-acetylmethionine. One can recognise an SAM domain in the interval 55 to 122 (QQEIEAKEAC…LNKCASMRLD (68 aa)). 3 disordered regions span residues 164–218 (PVAD…HSAD), 230–256 (SSLPQSTREGLNQSFHPKNEKPTRTRA), and 308–343 (NGDLQTSPPAACRKGLPCSSKSSGESSPLENSSTVS). Polar residues predominate over residues 179 to 188 (NTASSESVLT). The span at 197 to 214 (SIHSESSGGSDSRSQSGH) shows a compositional bias: low complexity. Polar residues predominate over residues 230–245 (SSLPQSTREGLNQSFH). Positions 322–340 (GLPCSSKSSGESSPLENSS) are enriched in low complexity. S411 carries the phosphoserine modification. Polar residues-rich tracts occupy residues 421–435 (SNGVNWRTGSISLGR) and 529–549 (PNQVTLDFEGNSVSEGRTTPS). 2 disordered regions span residues 421–443 (SNGVNWRTGSISLGRQQGPGMRE) and 514–578 (HSTL…GASL). Residues 663–868 (VPLIVHVQRT…HMITECNRLF (206 aa)) enclose the Rho-GAP domain. The 211-residue stretch at 899-1109 (LAESGATFHT…SFQPLVAEGP (211 aa)) folds into the START domain.

Homodimer. Interacts with TAX1BP1.

The protein resides in the cytoplasm. Its subcellular location is the membrane. It localises to the mitochondrion membrane. It is found in the lipid droplet. Its function is as follows. May function as a GTPase-activating protein. In Mus musculus (Mouse), this protein is StAR-related lipid transfer protein 13 (Stard13).